Consider the following 323-residue polypeptide: Small ribosomal subunit protein mS35 (323 aa).

A disordered region spans residues 31-59 (PVPTPSLPERTPGNERPPRRKALPPRTEK). Positions 257 to 321 (SSERNILETL…YKESVKRLLN (65 aa)) form a coiled coil.

It belongs to the mitochondrion-specific ribosomal protein mS35 family. In terms of assembly, component of the mitochondrial small ribosomal subunit (mt-SSU). Mature mammalian 55S mitochondrial ribosomes consist of a small (28S) and a large (39S) subunit. The 28S small subunit contains a 12S ribosomal RNA (12S mt-rRNA) and 30 different proteins. The 39S large subunit contains a 16S rRNA (16S mt-rRNA), a copy of mitochondrial valine transfer RNA (mt-tRNA(Val)), which plays an integral structural role, and 52 different proteins.

It localises to the mitochondrion. The polypeptide is Small ribosomal subunit protein mS35 (Homo sapiens (Human)).